Reading from the N-terminus, the 173-residue chain is Peptidyl-prolyl cis-trans isomerase cyp3 (173 aa).

The 165-residue stretch at 8 to 172 (FMDIAIDGRL…SNVAIVECGE (165 aa)) folds into the PPIase cyclophilin-type domain.

It belongs to the cyclophilin-type PPIase family. PPIase H subfamily.

The protein localises to the cytoplasm. Its subcellular location is the cytoskeleton. The protein resides in the microtubule organizing center. It is found in the spindle pole body. The enzyme catalyses [protein]-peptidylproline (omega=180) = [protein]-peptidylproline (omega=0). In terms of biological role, PPIases accelerate the folding of proteins. It catalyzes the cis-trans isomerization of proline imidic peptide bonds in oligopeptides. This Schizosaccharomyces pombe (strain 972 / ATCC 24843) (Fission yeast) protein is Peptidyl-prolyl cis-trans isomerase cyp3 (cyp3).